Consider the following 494-residue polypeptide: Smoothelin-like protein 1 (494 aa).

Composition is skewed to basic and acidic residues over residues 1 to 10 (MEQKEGKLSE), 74 to 104 (DEVK…KEET), 112 to 166 (TGRK…KATV), and 179 to 232 (TGQR…KEEA). The interval 1–348 (MEQKEGKLSE…ARPRGPRAQN (348 aa)) is disordered. A coiled-coil region spans residues 123–145 (KEAEEKESTLASEKQKAEEKEAK). Residues 233 to 255 (DAKEEAEDAEEAEPGSPSEEQEQ) are compositionally biased toward acidic residues. Composition is skewed to low complexity over residues 269–279 (PSSPEEWPESP) and 302–314 (SPSA…SDVP). Residues 324 to 335 (GEKKEKAPERRV) are compositionally biased toward basic and acidic residues. Ser336 is subject to Phosphoserine. A Calponin-homology (CH) domain is found at 378–484 (GGVKNMLLEW…YIQELYRSLV (107 aa)). A calmodulin-binding region spans residues 476–494 (IQELYRSLVQKGLVKTKKK).

The protein belongs to the smoothelin family. In terms of assembly, interacts with PPP1R12A. In terms of processing, maximal phosphorylation of Ser-336 correlates with maximal relaxation of aorta in response to acetylcholine. Expressed in striated muscles, specifically in type 2a fibers (at protein level).

It is found in the cytoplasm. Its subcellular location is the myofibril. The protein resides in the sarcomere. It localises to the i band. The protein localises to the m line. It is found in the nucleus. Its function is as follows. Plays a role in the regulation of contractile properties of both striated and smooth muscles. When unphosphorylated, may inhibit myosin dephosphorylation. Phosphorylation at Ser-299 reduces this inhibitory activity. The polypeptide is Smoothelin-like protein 1 (SMTNL1) (Homo sapiens (Human)).